The sequence spans 260 residues: Phosphate import ATP-binding protein PstB 1 (260 aa).

The ABC transporter domain occupies 13-255; sequence ISARDLNVHY…PQHPLTQGYI (243 aa). 45–52 serves as a coordination point for ATP; that stretch reads GPSGCGKS.

Belongs to the ABC transporter superfamily. Phosphate importer (TC 3.A.1.7) family. In terms of assembly, the complex is composed of two ATP-binding proteins (PstB), two transmembrane proteins (PstC and PstA) and a solute-binding protein (PstS).

The protein resides in the cell inner membrane. The enzyme catalyses phosphate(out) + ATP + H2O = ADP + 2 phosphate(in) + H(+). In terms of biological role, part of the ABC transporter complex PstSACB involved in phosphate import. Responsible for energy coupling to the transport system. This chain is Phosphate import ATP-binding protein PstB 1, found in Paramagnetospirillum magneticum (strain ATCC 700264 / AMB-1) (Magnetospirillum magneticum).